Here is a 66-residue protein sequence, read N- to C-terminus: Large ribosomal subunit protein bL35c (66 aa).

The protein belongs to the bacterial ribosomal protein bL35 family.

The protein localises to the plastid. The protein resides in the chloroplast. The protein is Large ribosomal subunit protein bL35c of Guillardia theta (Cryptophyte).